The sequence spans 376 residues: Ribonucleoside-diphosphate reductase subunit beta (376 aa).

Fe cation is bound by residues D85, E116, and H119. Y123 is an active-site residue. 3 residues coordinate Fe cation: E205, E239, and H242.

It belongs to the ribonucleoside diphosphate reductase small chain family. Tetramer of two alpha and two beta subunits. Requires Fe cation as cofactor.

The catalysed reaction is a 2'-deoxyribonucleoside 5'-diphosphate + [thioredoxin]-disulfide + H2O = a ribonucleoside 5'-diphosphate + [thioredoxin]-dithiol. Functionally, provides the precursors necessary for DNA synthesis. Catalyzes the biosynthesis of deoxyribonucleotides from the corresponding ribonucleotides. The polypeptide is Ribonucleoside-diphosphate reductase subunit beta (nrdB) (Buchnera aphidicola subsp. Acyrthosiphon pisum (strain APS) (Acyrthosiphon pisum symbiotic bacterium)).